The chain runs to 828 residues: Periplasmic nitrate reductase (828 aa).

The tat-type signal signal peptide spans M1–A31. The 57-residue stretch at I39 to D95 folds into the 4Fe-4S Mo/W bis-MGD-type domain. C46, C49, C53, and C81 together coordinate [4Fe-4S] cluster. Residues K83, Q150, N175, C179, W212 to M219, S243 to H247, Q262 to D264, M372, Q376, N482, S508 to D509, K531, D558, and T718 to T727 each bind Mo-bis(molybdopterin guanine dinucleotide). F794 provides a ligand contact to substrate. Positions 802 and 819 each coordinate Mo-bis(molybdopterin guanine dinucleotide).

This sequence belongs to the prokaryotic molybdopterin-containing oxidoreductase family. NasA/NapA/NarB subfamily. In terms of assembly, component of the periplasmic nitrate reductase NapAB complex composed of NapA and NapB. Requires [4Fe-4S] cluster as cofactor. Mo-bis(molybdopterin guanine dinucleotide) is required as a cofactor. Post-translationally, predicted to be exported by the Tat system. The position of the signal peptide cleavage has not been experimentally proven.

The protein localises to the periplasm. It catalyses the reaction 2 Fe(II)-[cytochrome] + nitrate + 2 H(+) = 2 Fe(III)-[cytochrome] + nitrite + H2O. In terms of biological role, catalytic subunit of the periplasmic nitrate reductase complex NapAB. Receives electrons from NapB and catalyzes the reduction of nitrate to nitrite. This is Periplasmic nitrate reductase from Salmonella schwarzengrund (strain CVM19633).